We begin with the raw amino-acid sequence, 88 residues long: EMBRYO SURROUNDING FACTOR 1-like protein 11 (88 aa).

Positions 1–23 (MISSSHFAIFCIILVSLFALQQY) are cleaved as a signal peptide. Disulfide bonds link cysteine 44–cysteine 59, cysteine 49–cysteine 78, cysteine 57–cysteine 74, and cysteine 60–cysteine 67.

It belongs to the MEG family. In terms of tissue distribution, expressed in stems.

This chain is EMBRYO SURROUNDING FACTOR 1-like protein 11 (ESFL11), found in Arabidopsis thaliana (Mouse-ear cress).